Reading from the N-terminus, the 286-residue chain is Phosphatidylglycerol--prolipoprotein diacylglyceryl transferase (286 aa).

7 consecutive transmembrane segments (helical) span residues 29-49 (IHWY…VGTY), 66-86 (LVFY…VFFY), 101-121 (VWEG…AMML), 130-150 (FLDL…LGRI), 181-201 (PSQL…LFWF), 209-229 (AAVA…VEFV), and 250-270 (LSLP…RHPA). Position 149 (Arg149) interacts with a 1,2-diacyl-sn-glycero-3-phospho-(1'-sn-glycerol).

This sequence belongs to the Lgt family.

It is found in the cell inner membrane. The enzyme catalyses L-cysteinyl-[prolipoprotein] + a 1,2-diacyl-sn-glycero-3-phospho-(1'-sn-glycerol) = an S-1,2-diacyl-sn-glyceryl-L-cysteinyl-[prolipoprotein] + sn-glycerol 1-phosphate + H(+). It participates in protein modification; lipoprotein biosynthesis (diacylglyceryl transfer). Its function is as follows. Catalyzes the transfer of the diacylglyceryl group from phosphatidylglycerol to the sulfhydryl group of the N-terminal cysteine of a prolipoprotein, the first step in the formation of mature lipoproteins. The chain is Phosphatidylglycerol--prolipoprotein diacylglyceryl transferase from Teredinibacter turnerae (strain ATCC 39867 / T7901).